The chain runs to 34 residues: Potassium channel toxin alpha-KTx 6 hetlaxin (34 aa).

Disulfide bonds link Cys-3–Cys-24, Cys-9–Cys-29, Cys-13–Cys-31, and Cys-19–Cys-34. The residue at position 34 (Cys-34) is a Cysteine amide.

Contains 4 disulfide bonds. As to expression, expressed by the venom gland.

Its subcellular location is the secreted. Its function is as follows. Binds to voltage-gated potassium channels Kv1.3/KCNA3 (IC(50)=0.48 uM) and Kv1.1/KCNA1 (IC(50)=6.7 uM) and inhibits channel activity. The chain is Potassium channel toxin alpha-KTx 6 hetlaxin from Heterometrus laoticus (Thai giant scorpion).